The following is a 218-amino-acid chain: Glutathione S-transferase Mu 5 (218 aa).

Residues 2 to 88 (PMTLGYWDIR…YIARKHNLCG (87 aa)) enclose the GST N-terminal domain. Glutathione-binding positions include 7–8 (YW), 46–50 (WLNEK), 59–60 (NL), and 72–73 (QS). The GST C-terminal domain maps to 90–207 (TEEEKIRVDI…MKSSQFLRGL (118 aa)). Tyr-116 contributes to the substrate binding site.

The protein belongs to the GST superfamily. Mu family. As to quaternary structure, homodimer.

It localises to the cytoplasm. The enzyme catalyses RX + glutathione = an S-substituted glutathione + a halide anion + H(+). Functionally, conjugation of reduced glutathione to a wide number of exogenous and endogenous hydrophobic electrophiles. This Homo sapiens (Human) protein is Glutathione S-transferase Mu 5 (GSTM5).